The chain runs to 130 residues: Flagellar assembly factor FliW (130 aa).

This sequence belongs to the FliW family. As to quaternary structure, interacts with translational regulator CsrA and flagellin(s).

The protein resides in the cytoplasm. Acts as an anti-CsrA protein, binds CsrA and prevents it from repressing translation of its target genes, one of which is flagellin. Binds to flagellin and participates in the assembly of the flagellum. This is Flagellar assembly factor FliW from Borrelia turicatae (strain 91E135).